A 167-amino-acid polypeptide reads, in one-letter code: MITVATAECFTHANIGLTIHKAAAGYEDFEFKYLFSEEDLKLMKNVRVISAMFVPSIIGVEKLLDIKLPEPDFNYKYAKAYSEEKDLEVAKLMAEGLKKKLNVNISIGSTAGVGRGAICILTDNNRYLFTSDVYANLITFENIKERQKNGIEKGIKRFLEILKKEYF.

This sequence belongs to the UPF0254 family.

This chain is UPF0254 protein MJ1251, found in Methanocaldococcus jannaschii (strain ATCC 43067 / DSM 2661 / JAL-1 / JCM 10045 / NBRC 100440) (Methanococcus jannaschii).